Reading from the N-terminus, the 282-residue chain is Pantothenate synthetase (282 aa).

30-37 (MGYLHEGH) serves as a coordination point for ATP. The active-site Proton donor is the His-37. Position 61 (Gln-61) interacts with (R)-pantoate. Residue Gln-61 coordinates beta-alanine. Position 147–150 (147–150 (GMKD)) interacts with ATP. Gln-153 lines the (R)-pantoate pocket. ATP is bound by residues Val-176 and 184 to 187 (KSSR).

The protein belongs to the pantothenate synthetase family. In terms of assembly, homodimer.

Its subcellular location is the cytoplasm. It carries out the reaction (R)-pantoate + beta-alanine + ATP = (R)-pantothenate + AMP + diphosphate + H(+). The protein operates within cofactor biosynthesis; (R)-pantothenate biosynthesis; (R)-pantothenate from (R)-pantoate and beta-alanine: step 1/1. Catalyzes the condensation of pantoate with beta-alanine in an ATP-dependent reaction via a pantoyl-adenylate intermediate. The polypeptide is Pantothenate synthetase (Bacillus cereus (strain B4264)).